Here is a 140-residue protein sequence, read N- to C-terminus: 3-hydroxyacyl-[acyl-carrier-protein] dehydratase FabZ (140 aa).

His46 is an active-site residue.

The protein belongs to the thioester dehydratase family. FabZ subfamily.

Its subcellular location is the cytoplasm. The catalysed reaction is a (3R)-hydroxyacyl-[ACP] = a (2E)-enoyl-[ACP] + H2O. Its function is as follows. Involved in unsaturated fatty acids biosynthesis. Catalyzes the dehydration of short chain beta-hydroxyacyl-ACPs and long chain saturated and unsaturated beta-hydroxyacyl-ACPs. In Pseudothermotoga lettingae (strain ATCC BAA-301 / DSM 14385 / NBRC 107922 / TMO) (Thermotoga lettingae), this protein is 3-hydroxyacyl-[acyl-carrier-protein] dehydratase FabZ.